Consider the following 637-residue polypeptide: Chaperone protein HtpG (637 aa).

The a; substrate-binding stretch occupies residues methionine 1 to arginine 345. The tract at residues glutamate 346–lysine 562 is b. The tract at residues leucine 563–lysine 637 is c.

The protein belongs to the heat shock protein 90 family. Homodimer.

It is found in the cytoplasm. Functionally, molecular chaperone. Has ATPase activity. This chain is Chaperone protein HtpG, found in Shewanella frigidimarina (strain NCIMB 400).